We begin with the raw amino-acid sequence, 560 residues long: Interferon alpha/beta receptor 1 (560 aa).

An N-terminal signal peptide occupies residues 1–24; sequence MLGLLGATTLMLVAGAPWVLPAGG. Residues 25–437 are Extracellular-facing; it reads ADLRSPENVV…EKTKPGSTSQ (413 aa). Fibronectin type-III domains follow at residues 29–125, 133–224, 231–329, and 333–433; these read SPEN…FQEA, HLEA…INTT, SPEN…TEMQ, and FPPV…TKPG. A glycan (N-linked (GlcNAc...) asparagine) is linked at N55. C76 and C84 form a disulfide bridge. N-linked (GlcNAc...) asparagine glycans are attached at residues N85, N108, and N172. Residues C199 and C220 are joined by a disulfide bond. 3 N-linked (GlcNAc...) asparagine glycosylation sites follow: N222, N249, and N254. Cysteines 283 and 291 form a disulfide. N-linked (GlcNAc...) asparagine glycans are attached at residues N313, N377, and N417. A disulfide bridge links C404 with C427. A helical transmembrane segment spans residues 438-458; the sequence is AWLIAGILSAILLFPAVFYGV. At 459–560 the chain is on the cytoplasmic side; that stretch reads KVVSRCINYV…GEEILRQAAV (102 aa). Residue C464 is the site of S-palmitoyl cysteine attachment. Residues Y467 and Y482 each carry the phosphotyrosine; by TYK2 modification. An important for interaction with TYK2 region spans residues 492–501; that stretch reads LLSTSEEQTE. Phosphoserine occurs at positions 496 and 536. Positions 520 to 560 are disordered; sequence QIDDNHSRCSSQTNRDSGVYSNEDENSGSKIGEEILRQAAV. Residues 527–539 show a composition bias toward polar residues; it reads RCSSQTNRDSGVY. Basic and acidic residues predominate over residues 550–560; that stretch reads IGEEILRQAAV.

It belongs to the type II cytokine receptor family. In terms of assembly, heterodimer with IFNAR2; forming the receptor for type I interferon. Interacts with TYK2. Interacts with STAT1 and STAT2; the interaction requires its phosphorylation at Tyr-482. Interacts (serine-phosphorylated form) with FBXW11, the substrate recognition component of a SCF (SKP1-CUL1-F-box protein) E3 ubiquitin-protein ligase complex. Interacts with SHMT2; this promotes interaction with ABRAXAS2 and the BRISC complex. Interacts with TRIM10; this interaction prevents association between IFNAR1 and TYK2. In terms of processing, ubiquitinated, leading to its internalization and degradation. Polyubiquitinated via 'Lys-48'-linked and 'Lys-63'-linked ubiquitin chains, leading to receptor internalization and lysosomal degradation. The 'Lys-63'-linked ubiquitin chains are cleaved off by the BRISC complex. Post-translationally, phosphorylated on tyrosine residues in response to interferon-binding: phosphorylation by TYK2 tyrosine kinase creates docking sites for STAT proteins. Phosphorylated on serine residues in response to interferon binding; this promotes interaction with FBXW11 and ubiquitination. Palmitoylation at Cys-464 is required for the activation of STAT1 and STAT2.

The protein localises to the cell membrane. The protein resides in the late endosome. Its subcellular location is the lysosome. In terms of biological role, together with IFNAR2, forms the heterodimeric receptor for type I interferons (including interferons alpha, beta, epsilon, omega and kappa). Type I interferon binding activates the JAK-STAT signaling cascade, resulting in transcriptional activation or repression of interferon-regulated genes that encode the effectors of the interferon response. Mechanistically, type I interferon-binding brings the IFNAR1 and IFNAR2 subunits into close proximity with one another, driving their associated Janus kinases (JAKs) (TYK2 bound to IFNAR1 and JAK1 bound to IFNAR2) to cross-phosphorylate one another. The activated kinases phosphorylate specific tyrosine residues on the intracellular domains of IFNAR1 and IFNAR2, forming docking sites for the STAT transcription factors. STAT proteins are then phosphorylated by the JAKs, promoting their translocation into the nucleus to regulate expression of interferon-regulated genes. Can also act independently of IFNAR2: form an active IFNB1 receptor by itself and activate a signaling cascade that does not involve activation of the JAK-STAT pathway. The polypeptide is Interferon alpha/beta receptor 1 (IFNAR1) (Sus scrofa (Pig)).